The sequence spans 63 residues: Cytochrome c oxidase subunit 7C, mitochondrial (63 aa).

A mitochondrion-targeting transit peptide spans 1-16; that stretch reads MLGQSIRRFTTSVVRR. Topologically, residues 17-33 are mitochondrial matrix; sequence SHYEEGPGKNLPFSVEN. The residue at position 25 (Lys25) is an N6-acetyllysine; alternate. Residue Lys25 is modified to N6-succinyllysine; alternate. A helical membrane pass occupies residues 34–60; the sequence is KWRLLLMMTVYFGSGFAAPFFIVRHQL. Topologically, residues 61–63 are mitochondrial intermembrane; sequence LKK.

This sequence belongs to the cytochrome c oxidase VIIc family. In terms of assembly, component of the cytochrome c oxidase (complex IV, CIV), a multisubunit enzyme composed of 14 subunits. The complex is composed of a catalytic core of 3 subunits MT-CO1, MT-CO2 and MT-CO3, encoded in the mitochondrial DNA, and 11 supernumerary subunits COX4I, COX5A, COX5B, COX6A, COX6B, COX6C, COX7A, COX7B, COX7C, COX8 and NDUFA4, which are encoded in the nuclear genome. The complex exists as a monomer or a dimer and forms supercomplexes (SCs) in the inner mitochondrial membrane with NADH-ubiquinone oxidoreductase (complex I, CI) and ubiquinol-cytochrome c oxidoreductase (cytochrome b-c1 complex, complex III, CIII), resulting in different assemblies (supercomplex SCI(1)III(2)IV(1) and megacomplex MCI(2)III(2)IV(2)). Interacts with RAB5IF.

It is found in the mitochondrion inner membrane. The protein operates within energy metabolism; oxidative phosphorylation. Its function is as follows. Component of the cytochrome c oxidase, the last enzyme in the mitochondrial electron transport chain which drives oxidative phosphorylation. The respiratory chain contains 3 multisubunit complexes succinate dehydrogenase (complex II, CII), ubiquinol-cytochrome c oxidoreductase (cytochrome b-c1 complex, complex III, CIII) and cytochrome c oxidase (complex IV, CIV), that cooperate to transfer electrons derived from NADH and succinate to molecular oxygen, creating an electrochemical gradient over the inner membrane that drives transmembrane transport and the ATP synthase. Cytochrome c oxidase is the component of the respiratory chain that catalyzes the reduction of oxygen to water. Electrons originating from reduced cytochrome c in the intermembrane space (IMS) are transferred via the dinuclear copper A center (CU(A)) of subunit 2 and heme A of subunit 1 to the active site in subunit 1, a binuclear center (BNC) formed by heme A3 and copper B (CU(B)). The BNC reduces molecular oxygen to 2 water molecules using 4 electrons from cytochrome c in the IMS and 4 protons from the mitochondrial matrix. This is Cytochrome c oxidase subunit 7C, mitochondrial (Cox7c) from Rattus norvegicus (Rat).